Here is a 268-residue protein sequence, read N- to C-terminus: Orotidine 5'-phosphate decarboxylase (268 aa).

Residues aspartate 39, 61–63 (KTH), 93–102 (DRKFADIGNT), tyrosine 219, and arginine 237 contribute to the substrate site. The active-site Proton donor is lysine 95.

This sequence belongs to the OMP decarboxylase family.

It catalyses the reaction orotidine 5'-phosphate + H(+) = UMP + CO2. The protein operates within pyrimidine metabolism; UMP biosynthesis via de novo pathway; UMP from orotate: step 2/2. The sequence is that of Orotidine 5'-phosphate decarboxylase (URA3) from Pachysolen tannophilus (Yeast).